The primary structure comprises 287 residues: MSSWLDKFVPSIVRSESKRSAGSVPEGLWKKCPKCENVLYRPELEKNLDVCPKCSHHLRVSARRRLDIFLDKEGRHEIAAHLEPEDKLKFKDSKRYKDRLADAQKATGEKDALVAMQGALNGMPVVAVAFEFSFLGGSMGAIVGERFIQAVNVCLEKRIPLVCFSASGGARMQEALISLMQMAKTSAGLERLKQEGIPYISVMTDPVFGGVSASLAMLGDLNVAEPNALIGFAGPRVIEQTVREKLPEGFQRSEFLLEKGALDMIIKRDEMRNRLYNILSLLTNKVA.

Residues 28-287 (LWKKCPKCEN…ILSLLTNKVA (260 aa)) enclose the CoA carboxyltransferase N-terminal domain. Zn(2+)-binding residues include cysteine 32, cysteine 35, cysteine 51, and cysteine 54. A C4-type zinc finger spans residues 32–54 (CPKCENVLYRPELEKNLDVCPKC).

Belongs to the AccD/PCCB family. In terms of assembly, acetyl-CoA carboxylase is a heterohexamer composed of biotin carboxyl carrier protein (AccB), biotin carboxylase (AccC) and two subunits each of ACCase subunit alpha (AccA) and ACCase subunit beta (AccD). It depends on Zn(2+) as a cofactor.

It localises to the cytoplasm. It catalyses the reaction N(6)-carboxybiotinyl-L-lysyl-[protein] + acetyl-CoA = N(6)-biotinyl-L-lysyl-[protein] + malonyl-CoA. The protein operates within lipid metabolism; malonyl-CoA biosynthesis; malonyl-CoA from acetyl-CoA: step 1/1. Its function is as follows. Component of the acetyl coenzyme A carboxylase (ACC) complex. Biotin carboxylase (BC) catalyzes the carboxylation of biotin on its carrier protein (BCCP) and then the CO(2) group is transferred by the transcarboxylase to acetyl-CoA to form malonyl-CoA. This is Acetyl-coenzyme A carboxylase carboxyl transferase subunit beta from Marinomonas sp. (strain MWYL1).